The following is a 508-amino-acid chain: Transcription termination factor MTERF4, chloroplastic (508 aa).

A chloroplast-targeting transit peptide spans 1–79 (MMKSLFLFSA…PSLLDMERGR (79 aa)). The segment covering 28–49 (RLTASASTSASSPPRAGCSRGP) has biased composition (low complexity). 2 disordered regions span residues 28 to 69 (RLTA…LYAR) and 475 to 508 (FDTN…EFIE). Residues 484–508 (VEDEVEDEDLDEDSDYDSTDDEFIE) are compositionally biased toward acidic residues.

Belongs to the mTERF family.

The protein resides in the plastid. It is found in the chloroplast stroma. Transcription termination factor required for processing and steady-state levels of plastid transcripts. Required for splicing of the chloroplastic group II intron. Required for the accumulation of 16S and 23S ribosomes. This is Transcription termination factor MTERF4, chloroplastic from Oryza sativa subsp. japonica (Rice).